Reading from the N-terminus, the 949-residue chain is RNA polymerase-associated protein RapA (949 aa).

The region spanning Glu-164 to Asn-332 is the Helicase ATP-binding domain. An ATP-binding site is contributed by Asp-177–Thr-184. Positions Asp-278–His-281 match the DEAH box motif. Residues Arg-474–His-628 enclose the Helicase C-terminal domain.

The protein belongs to the SNF2/RAD54 helicase family. RapA subfamily. As to quaternary structure, interacts with the RNAP. Has a higher affinity for the core RNAP than for the holoenzyme. Its ATPase activity is stimulated by binding to RNAP.

Its function is as follows. Transcription regulator that activates transcription by stimulating RNA polymerase (RNAP) recycling in case of stress conditions such as supercoiled DNA or high salt concentrations. Probably acts by releasing the RNAP, when it is trapped or immobilized on tightly supercoiled DNA. Does not activate transcription on linear DNA. Probably not involved in DNA repair. In Stutzerimonas stutzeri (strain A1501) (Pseudomonas stutzeri), this protein is RNA polymerase-associated protein RapA.